Reading from the N-terminus, the 431-residue chain is Glutamate-1-semialdehyde 2,1-aminomutase (431 aa).

At Lys269 the chain carries N6-(pyridoxal phosphate)lysine.

The protein belongs to the class-III pyridoxal-phosphate-dependent aminotransferase family. HemL subfamily. As to quaternary structure, homodimer. The cofactor is pyridoxal 5'-phosphate.

Its subcellular location is the cytoplasm. It catalyses the reaction (S)-4-amino-5-oxopentanoate = 5-aminolevulinate. Its pathway is porphyrin-containing compound metabolism; protoporphyrin-IX biosynthesis; 5-aminolevulinate from L-glutamyl-tRNA(Glu): step 2/2. This Francisella tularensis subsp. tularensis (strain SCHU S4 / Schu 4) protein is Glutamate-1-semialdehyde 2,1-aminomutase.